Consider the following 339-residue polypeptide: Exopolyphosphatase 1 (339 aa).

The interval 315 to 339 (QTSVRDTRGQEVDRNAANRSRGDKT) is disordered. Residues 319–339 (RDTRGQEVDRNAANRSRGDKT) show a composition bias toward basic and acidic residues.

Belongs to the GppA/Ppx family. Homodimer.

The enzyme catalyses [phosphate](n) + H2O = [phosphate](n-1) + phosphate + H(+). Degradation of inorganic polyphosphates (polyP). Releases orthophosphate processively from the ends of the polyP chain. In Mycobacterium leprae (strain TN), this protein is Exopolyphosphatase 1.